A 347-amino-acid polypeptide reads, in one-letter code: Haptoglobin (347 aa).

The first 18 residues, 1-18 (MSDLGAVVALLLWGQLFA), serve as a signal peptide directing secretion. One can recognise a Sushi domain in the interval 31 to 88 (DGCPKPPMIANGYVEHLVRYQCKNYYRLRTEGDGVYTLNNEKQWTNKAVGDKLPECEA). 2 cysteine pairs are disulfide-bonded: cysteine 52-cysteine 86 and cysteine 90-cysteine 207. The serine protease stretch occupies residues 103–347 (ILGGHLDAKG…DWVQKTIAEN (245 aa)). Asparagine 125, asparagine 148, asparagine 152, asparagine 182, and asparagine 232 each carry an N-linked (GlcNAc...) asparagine glycan. Cystine bridges form between cysteine 250–cysteine 281 and cysteine 292–cysteine 322. The interval 259-264 (VPEKKT) is interaction with CD163.

The protein belongs to the peptidase S1 family. In terms of assembly, tetramer of two alpha and two beta chains; disulfide-linked. The hemoglobin/haptoglobin complex is composed of a haptoglobin dimer bound to two hemoglobin alpha-beta dimers. Interacts with CD163. Interacts with ERGIC3. Expressed by the liver and secreted in plasma.

It is found in the secreted. As a result of hemolysis, hemoglobin is found to accumulate in the kidney and is secreted in the urine. Haptoglobin captures, and combines with free plasma hemoglobin to allow hepatic recycling of heme iron and to prevent kidney damage. Haptoglobin also acts as an antioxidant, has antibacterial activity and plays a role in modulating many aspects of the acute phase response. Hemoglobin/haptoglobin complexes are rapidly cleared by the macrophage CD163 scavenger receptor expressed on the surface of liver Kupfer cells through an endocytic lysosomal degradation pathway. This is Haptoglobin (HP) from Papio hamadryas (Hamadryas baboon).